We begin with the raw amino-acid sequence, 497 residues long: Tripartite motif-containing protein 5 (497 aa).

At alanine 2 the chain carries N-acetylalanine. The segment at 15 to 60 adopts an RING-type zinc-finger fold; it reads CPICLELLTEPLSLPCGHSFCQACITANHRKSMLYKEGERSCPVCR. Serine 87 is modified (phosphoserine). The B box-type zinc-finger motif lies at 92–133; sequence LKVDHCARHGEKLLLFCQEDSKVICWLCERSQEHRGHHTFLM. Cysteine 97, histidine 100, cysteine 119, and histidine 125 together coordinate Zn(2+). A coiled-coil region spans residues 137-225; that stretch reads AQEYHVKLQT…LTKSETEMVQ (89 aa). Residues 187 to 200 are required for interaction with GABARAP and for autophagy; the sequence is FEQLREILDWEESN. In terms of domain architecture, B30.2/SPRY spans 283-497; sequence LKGMLDMFRE…VPMTLCSPSS (215 aa).

The protein belongs to the TRIM/RBCC family. Can form homodimers and homotrimers. In addition to lower-order dimerization, also exhibits a higher-order multimerization and both low- and high-order multimerizations are essential for its restriction activity. Interacts with BTBD1 and BTBD2. Interacts with PSMC4, PSMC5, PSMD7 and HSPA8/HSC70. Interacts (via B30.2/SPRY domain) with HSPA1A/B. Interacts with PSMC2, MAP3K7/TAK1, TAB2 and TAB3. Interacts with SQSTM1. Interacts with TRIM6 and TRIM34. Interacts with ULK1 (phosphorylated form), GABARAP, GABARAPL1, GABARAPL2, MAP1LC3A, MAP1LC3C and BECN1. Degraded in a proteasome-independent fashion in the absence of viral infection but in a proteasome-dependent fashion following exposure to restriction sensitive virus. In terms of processing, autoubiquitinated in a RING finger- and UBE2D2-dependent manner. Monoubiquitinated by TRIM21. Deubiquitinated by Yersinia YopJ. Ubiquitination may not lead to proteasomal degradation.

The protein resides in the cytoplasm. Its subcellular location is the nucleus. It carries out the reaction S-ubiquitinyl-[E2 ubiquitin-conjugating enzyme]-L-cysteine + [acceptor protein]-L-lysine = [E2 ubiquitin-conjugating enzyme]-L-cysteine + N(6)-ubiquitinyl-[acceptor protein]-L-lysine.. The protein operates within protein modification; protein ubiquitination. In terms of biological role, capsid-specific restriction factor that prevents infection from non-host-adapted retroviruses. Blocks viral replication early in the life cycle, after viral entry but before reverse transcription. In addition to acting as a capsid-specific restriction factor, also acts as a pattern recognition receptor that activates innate immune signaling in response to the retroviral capsid lattice. Binding to the viral capsid triggers its E3 ubiquitin ligase activity, and in concert with the heterodimeric ubiquitin conjugating enzyme complex UBE2V1-UBE2N (also known as UBC13-UEV1A complex) generates 'Lys-63'-linked polyubiquitin chains, which in turn are catalysts in the autophosphorylation of the MAP3K7/TAK1 complex (includes TAK1, TAB2, and TAB3). Activation of the MAP3K7/TAK1 complex by autophosphorylation results in the induction and expression of NF-kappa-B and MAPK-responsive inflammatory genes, thereby leading to an innate immune response in the infected cell. Plays a role in regulating autophagy through activation of autophagy regulator BECN1 by causing its dissociation from its inhibitors BCL2 and TAB2. This Papio anubis (Olive baboon) protein is Tripartite motif-containing protein 5 (TRIM5).